Here is a 179-residue protein sequence, read N- to C-terminus: Large ribosomal subunit protein uL6 (179 aa).

Belongs to the universal ribosomal protein uL6 family. As to quaternary structure, part of the 50S ribosomal subunit.

In terms of biological role, this protein binds to the 23S rRNA, and is important in its secondary structure. It is located near the subunit interface in the base of the L7/L12 stalk, and near the tRNA binding site of the peptidyltransferase center. This Rhodococcus opacus (strain B4) protein is Large ribosomal subunit protein uL6.